Here is a 425-residue protein sequence, read N- to C-terminus: Serine--tRNA ligase (425 aa).

Position 228-230 (228-230 (TAE)) interacts with L-serine. 259–261 (RSE) provides a ligand contact to ATP. Residue E282 coordinates L-serine. 346–349 (EIAS) serves as a coordination point for ATP. S382 contributes to the L-serine binding site.

It belongs to the class-II aminoacyl-tRNA synthetase family. Type-1 seryl-tRNA synthetase subfamily. As to quaternary structure, homodimer. The tRNA molecule binds across the dimer.

Its subcellular location is the cytoplasm. The enzyme catalyses tRNA(Ser) + L-serine + ATP = L-seryl-tRNA(Ser) + AMP + diphosphate + H(+). The catalysed reaction is tRNA(Sec) + L-serine + ATP = L-seryl-tRNA(Sec) + AMP + diphosphate + H(+). It functions in the pathway aminoacyl-tRNA biosynthesis; selenocysteinyl-tRNA(Sec) biosynthesis; L-seryl-tRNA(Sec) from L-serine and tRNA(Sec): step 1/1. Functionally, catalyzes the attachment of serine to tRNA(Ser). Is also able to aminoacylate tRNA(Sec) with serine, to form the misacylated tRNA L-seryl-tRNA(Sec), which will be further converted into selenocysteinyl-tRNA(Sec). The chain is Serine--tRNA ligase from Rickettsia peacockii (strain Rustic).